Reading from the N-terminus, the 203-residue chain is Probable GTP-binding protein EngB (203 aa).

In terms of domain architecture, EngB-type G spans 1–190; the sequence is MPEIVLVGRS…LEALQERVRK (190 aa). GTP is bound by residues 8–15, 35–39, 53–56, 132–135, and 169–171; these read GRSNVGKS, GVTRK, DMPG, NKID, and ISA. 2 residues coordinate Mg(2+): Ser-15 and Thr-37.

It belongs to the TRAFAC class TrmE-Era-EngA-EngB-Septin-like GTPase superfamily. EngB GTPase family. Mg(2+) serves as cofactor.

In terms of biological role, necessary for normal cell division and for the maintenance of normal septation. The polypeptide is Probable GTP-binding protein EngB (Methanopyrus kandleri (strain AV19 / DSM 6324 / JCM 9639 / NBRC 100938)).